The sequence spans 425 residues: MSRNEALFEASQKVIPGGVNSPVRAFRSVGGTPVFFSRARGSRVWDADGREYIDYVGSWGPAILGHAHPGTVKAVQDAAANGLSFGAPSEAELTIATRITELLPSVEKVRLVSSGTEATMSAIRLARGFTGRSKFIKFEGCYHGHADFLLVKAGSGALTFGNPTSAGVPPEVAAQTIVLDYNDVAGLERTFAEIGDEIACIIVEPFAGNMNLVKPSAEFMAAMRRLCDEHGALLIFDEVMTGFRVDLGCAQKLLGIRPDLTTLGKVIGGGMPVGAFGGRADVMDALAPVGPVYQAGTLSGNPVAVAAGLATLASVSEPGFYPALAARTEKLVKGLTAAAREAGVTFCADSVGGMFGLYFAAEPPASFAEVMRCDKEKFNRFFHAMLDHGVYLAPSAFEAGFVSAAHSDADIDATVAAAREVFRTL.

At Lys-265 the chain carries N6-(pyridoxal phosphate)lysine.

This sequence belongs to the class-III pyridoxal-phosphate-dependent aminotransferase family. HemL subfamily. Homodimer. Pyridoxal 5'-phosphate is required as a cofactor.

The protein resides in the cytoplasm. The catalysed reaction is (S)-4-amino-5-oxopentanoate = 5-aminolevulinate. It participates in porphyrin-containing compound metabolism; protoporphyrin-IX biosynthesis; 5-aminolevulinate from L-glutamyl-tRNA(Glu): step 2/2. This is Glutamate-1-semialdehyde 2,1-aminomutase from Thiobacillus denitrificans (strain ATCC 25259 / T1).